A 435-amino-acid chain; its full sequence is 3-ketoacyl-CoA thiolase (435 aa).

Cys-98 serves as the catalytic Acyl-thioester intermediate. Catalysis depends on proton acceptor residues His-391 and Cys-421.

This sequence belongs to the thiolase-like superfamily. Thiolase family. As to quaternary structure, heterotetramer of two alpha chains (FadJ) and two beta chains (FadI).

The protein localises to the cytoplasm. The enzyme catalyses an acyl-CoA + acetyl-CoA = a 3-oxoacyl-CoA + CoA. The protein operates within lipid metabolism; fatty acid beta-oxidation. In terms of biological role, catalyzes the final step of fatty acid oxidation in which acetyl-CoA is released and the CoA ester of a fatty acid two carbons shorter is formed. In Vibrio vulnificus (strain CMCP6), this protein is 3-ketoacyl-CoA thiolase.